The following is a 317-amino-acid chain: tRNA dimethylallyltransferase (317 aa).

19–26 (GPTASGKS) provides a ligand contact to ATP. Substrate is bound at residue 21–26 (TASGKS). An interaction with substrate tRNA region spans residues 44 to 47 (DSMQ).

The protein belongs to the IPP transferase family. In terms of assembly, monomer. Requires Mg(2+) as cofactor.

It catalyses the reaction adenosine(37) in tRNA + dimethylallyl diphosphate = N(6)-dimethylallyladenosine(37) in tRNA + diphosphate. Functionally, catalyzes the transfer of a dimethylallyl group onto the adenine at position 37 in tRNAs that read codons beginning with uridine, leading to the formation of N6-(dimethylallyl)adenosine (i(6)A). The chain is tRNA dimethylallyltransferase from Methylorubrum populi (strain ATCC BAA-705 / NCIMB 13946 / BJ001) (Methylobacterium populi).